Reading from the N-terminus, the 263-residue chain is Ribosomal RNA small subunit methyltransferase A (263 aa).

Residues His13, Leu15, Gly40, Glu61, Asp86, and Asn105 each coordinate S-adenosyl-L-methionine.

This sequence belongs to the class I-like SAM-binding methyltransferase superfamily. rRNA adenine N(6)-methyltransferase family. RsmA subfamily.

The protein localises to the cytoplasm. It catalyses the reaction adenosine(1518)/adenosine(1519) in 16S rRNA + 4 S-adenosyl-L-methionine = N(6)-dimethyladenosine(1518)/N(6)-dimethyladenosine(1519) in 16S rRNA + 4 S-adenosyl-L-homocysteine + 4 H(+). Its function is as follows. Specifically dimethylates two adjacent adenosines (A1518 and A1519) in the loop of a conserved hairpin near the 3'-end of 16S rRNA in the 30S particle. May play a critical role in biogenesis of 30S subunits. The protein is Ribosomal RNA small subunit methyltransferase A of Dichelobacter nodosus (strain VCS1703A).